We begin with the raw amino-acid sequence, 154 residues long: Prefoldin subunit alpha (154 aa).

The disordered stretch occupies residues 123–154; it reads EAEQLEQQAQQAQQQMMQQQMQAQQQPQDGEQ. Low complexity predominate over residues 127–154; the sequence is LEQQAQQAQQQMMQQQMQAQQQPQDGEQ.

It belongs to the prefoldin alpha subunit family. As to quaternary structure, heterohexamer of two alpha and four beta subunits.

Its subcellular location is the cytoplasm. In terms of biological role, molecular chaperone capable of stabilizing a range of proteins. Seems to fulfill an ATP-independent, HSP70-like function in archaeal de novo protein folding. The protein is Prefoldin subunit alpha of Halobacterium salinarum (strain ATCC 29341 / DSM 671 / R1).